A 305-amino-acid chain; its full sequence is ATP synthase subunit gamma, mitochondrial (305 aa).

This sequence belongs to the ATPase gamma chain family. F-type ATPases have 2 components, F(1) - the catalytic core - and F(o) - the membrane proton channel. F(1) has five subunits: alpha(3), beta(3), gamma(1), delta(1), epsilon(1), plus the additional subunit P18 (Tb427.05.1710) that is not present in F(1)F(o) ATP synthase from metazoa. Subunit P18 (Tb927.5.1710) interacts with the alpha subunit with a 1:1 stoichiometry; the interaction is direct. Subunit gamma is part of the central stalk. F(o) has three main subunits: a, b and c. The trypanosomal ATPase complex contains additional subunits that are not present in the F(1)F(o) ATP synthase from metazoa.

The protein resides in the mitochondrion. It is found in the mitochondrion inner membrane. Its function is as follows. Mitochondrial membrane ATP synthase (F(1)F(o) ATP synthase) produces ATP from ADP in the presence of a proton gradient across the membrane which is generated by electron transport complexes of the respiratory chain. F-type ATPases consist of two structural domains, F(1) - containing the extramembraneous catalytic core, and F(o) - containing the membrane proton channel, linked together by a central stalk and a peripheral stalk. During catalysis, ATP synthesis in the catalytic domain of F(1) is coupled via a rotary mechanism of the central stalk subunits to proton translocation. Subunits alpha and beta form the catalytic core in F(1). Rotation of the central stalk against the surrounding alpha(3)beta(3) subunits leads to hydrolysis of ATP in three separate catalytic sites on the beta subunits. Contrary to the procyclic, insect form that requires F(1)F(o) ATP synthase for ATP synthesis, the bloodstream form relies on ATP hydrolysis by F(1)F(o) ATP synthase to maintain its mitochondrial membrane potential. In Trypanosoma brucei brucei, this protein is ATP synthase subunit gamma, mitochondrial.